A 545-amino-acid polypeptide reads, in one-letter code: Chaperonin GroEL (545 aa).

Residues 30–33 (TLGP), Lys-51, 87–91 (DGTTT), Gly-415, and Asp-495 contribute to the ATP site.

It belongs to the chaperonin (HSP60) family. As to quaternary structure, forms a cylinder of 14 subunits composed of two heptameric rings stacked back-to-back. Interacts with the co-chaperonin GroES.

It localises to the cytoplasm. The enzyme catalyses ATP + H2O + a folded polypeptide = ADP + phosphate + an unfolded polypeptide.. Its function is as follows. Together with its co-chaperonin GroES, plays an essential role in assisting protein folding. The GroEL-GroES system forms a nano-cage that allows encapsulation of the non-native substrate proteins and provides a physical environment optimized to promote and accelerate protein folding. The sequence is that of Chaperonin GroEL from Shewanella baltica (strain OS155 / ATCC BAA-1091).